A 630-amino-acid chain; its full sequence is Vacuolar protein 8 (630 aa).

Glycine 2 carries the N-myristoyl glycine lipid modification. 9 ARM repeats span residues 74-115, 117-156, 158-197, 199-238, 242-281, 283-322, 324-364, 408-447, and 456-495; these read EITE…NLAV, AENK…NLAT, DENK…NMTH, DENR…NIAV, NRKK…NLAS, SKYQ…NVSI, PANE…NLAA, DDLK…NLSS, and FNAV…QLLE. Disordered regions lie at residues 519–558 and 572–630; these read AKSP…EGEG and EVGE…GRDR. Acidic residues predominate over residues 543 to 558; the sequence is SEDEFEDGLTDQEGEG. The span at 598–607 shows a compositional bias: polar residues; the sequence is GQGQTSQVGS.

This sequence belongs to the beta-catenin family.

The protein localises to the vacuole membrane. Functionally, functions in both vacuole inheritance and protein targeting from the cytoplasm to vacuole. The sequence is that of Vacuolar protein 8 (VAC8) from Cryptococcus neoformans var. neoformans serotype D (strain B-3501A) (Filobasidiella neoformans).